Here is a 184-residue protein sequence, read N- to C-terminus: Thymidine kinase (184 aa).

ATP is bound by residues 10-17 (GPMYSGKT), His53, and 83-86 (DEVQ). Glu84 (proton acceptor) is an active-site residue. His115 contacts substrate. The Zn(2+) site is built by Cys140 and Cys143. Residues 161 to 164 (IDVG) and Tyr169 each bind substrate. Zn(2+) contacts are provided by Cys173 and Cys176.

Belongs to the thymidine kinase family. As to quaternary structure, homotetramer.

It is found in the cytoplasm. The enzyme catalyses thymidine + ATP = dTMP + ADP + H(+). The sequence is that of Thymidine kinase (tdk) from Thermotoga maritima (strain ATCC 43589 / DSM 3109 / JCM 10099 / NBRC 100826 / MSB8).